We begin with the raw amino-acid sequence, 272 residues long: Putative phosphoenolpyruvate synthase regulatory protein (272 aa).

152–159 (GVSRCGKT) contacts ADP.

Belongs to the pyruvate, phosphate/water dikinase regulatory protein family. PSRP subfamily.

It carries out the reaction [pyruvate, water dikinase] + ADP = [pyruvate, water dikinase]-phosphate + AMP + H(+). The enzyme catalyses [pyruvate, water dikinase]-phosphate + phosphate + H(+) = [pyruvate, water dikinase] + diphosphate. Its function is as follows. Bifunctional serine/threonine kinase and phosphorylase involved in the regulation of the phosphoenolpyruvate synthase (PEPS) by catalyzing its phosphorylation/dephosphorylation. The chain is Putative phosphoenolpyruvate synthase regulatory protein from Pseudomonas putida (strain ATCC 700007 / DSM 6899 / JCM 31910 / BCRC 17059 / LMG 24140 / F1).